Consider the following 184-residue polypeptide: Acyl-homoserine-lactone synthase (184 aa).

This sequence belongs to the autoinducer synthase family.

The catalysed reaction is a fatty acyl-[ACP] + S-adenosyl-L-methionine = an N-acyl-L-homoserine lactone + S-methyl-5'-thioadenosine + holo-[ACP] + H(+). Involved in the synthesis of the acyl-homoserine lactone (AHL) signal N-(3-hydroxydodecanoyl)-L-HSL (3-hydroxy-C(12)-HSL or OH-dDHL). Required for normal biofilm development. The polypeptide is Acyl-homoserine-lactone synthase (Acinetobacter baumannii).